The primary structure comprises 23 residues: Potassium channel toxin alpha-KTx 13.1 (23 aa).

3 cysteine pairs are disulfide-bonded: C2-C15, C5-C20, and C9-C22. The interaction with Ca(2+)-activated K(+) channels stretch occupies residues 13–20; the sequence is GKCINGRC.

In terms of tissue distribution, expressed by the venom gland.

It is found in the secreted. In terms of biological role, blocks reversibly Shaker B potassium channels. Also displaces binding of noxiustoxin to mouse brain synaptosome membranes. The protein is Potassium channel toxin alpha-KTx 13.1 of Tityus obscurus (Amazonian scorpion).